The sequence spans 282 residues: Biotin synthase (282 aa).

A Radical SAM core domain is found at 1–228 (MQEIFLCSIS…NARLMVAGGR (228 aa)). Cysteine 17, cysteine 21, and cysteine 24 together coordinate [4Fe-4S] cluster. 4 residues coordinate [2Fe-2S] cluster: cysteine 61, cysteine 96, cysteine 154, and arginine 221.

Belongs to the radical SAM superfamily. Biotin synthase family. Homodimer. It depends on [4Fe-4S] cluster as a cofactor. Requires [2Fe-2S] cluster as cofactor.

The enzyme catalyses (4R,5S)-dethiobiotin + (sulfur carrier)-SH + 2 reduced [2Fe-2S]-[ferredoxin] + 2 S-adenosyl-L-methionine = (sulfur carrier)-H + biotin + 2 5'-deoxyadenosine + 2 L-methionine + 2 oxidized [2Fe-2S]-[ferredoxin]. It participates in cofactor biosynthesis; biotin biosynthesis; biotin from 7,8-diaminononanoate: step 2/2. In terms of biological role, catalyzes the conversion of dethiobiotin (DTB) to biotin by the insertion of a sulfur atom into dethiobiotin via a radical-based mechanism. This chain is Biotin synthase, found in Helicobacter pylori (strain Shi470).